An 80-amino-acid polypeptide reads, in one-letter code: Large ribosomal subunit protein bL31B (80 aa).

Belongs to the bacterial ribosomal protein bL31 family. Type B subfamily. As to quaternary structure, part of the 50S ribosomal subunit.

The chain is Large ribosomal subunit protein bL31B from Oenococcus oeni (strain ATCC BAA-331 / PSU-1).